The sequence spans 409 residues: MHAWPASEVPALPGKGRDLRIHDTATGGRITLDPGPVARIYVCGITPYDATHMGHAATYNAFDLVQRVWLDTKRQVHYVQNVTDVDDPLLERAVRDGQDWTELAERETALFREDMTALRMLPPRHYIGAVEAIPGIVPLVERLRDAGAAYDLDGDIYFSVDTDPHFGEVSGLDAEAMRLLSAERGGDPERPGKKNPLDPMLWMAARPGEPSWDGASLGEGRPGWHIECVAIALDHLGMGFDIQGGGSDLAFPHHEMGASHAQALTGEHPFAKAYVHAGMVGLDGEKMSKSRGNLVFVSTLRREGVDPAALRLALLSRHYRSDWEWTDQVLAEAVERLARWRAAVSRPDGPSAEALVEEVREALADDLDSPAALAAVDRWAALQSAEGGTDEGAPGVVSRTVDALLGVAL.

Cysteine 43 provides a ligand contact to Zn(2+). Residues 43–46 (CGIT), threonine 58, and 81–83 (NVT) contribute to the L-cysteinyl-5'-AMP site. A 'HIGH' region motif is present at residues 45 to 55 (ITPYDATHMGH). The 'ERGGDP' region motif lies at 183–188 (ERGGDP). Tryptophan 224 serves as a coordination point for L-cysteinyl-5'-AMP. Cysteine 228 serves as a coordination point for Zn(2+). L-cysteinyl-5'-AMP is bound at residue 246–248 (GSD). Histidine 253 is a binding site for Zn(2+). L-cysteinyl-5'-AMP is bound at residue valine 280. Residues 286 to 290 (KMSKS) carry the 'KMSKS' region motif.

This sequence belongs to the class-I aminoacyl-tRNA synthetase family. MshC subfamily. Monomer. Zn(2+) is required as a cofactor.

The catalysed reaction is 1D-myo-inositol 2-amino-2-deoxy-alpha-D-glucopyranoside + L-cysteine + ATP = 1D-myo-inositol 2-(L-cysteinylamino)-2-deoxy-alpha-D-glucopyranoside + AMP + diphosphate + H(+). Catalyzes the ATP-dependent condensation of GlcN-Ins and L-cysteine to form L-Cys-GlcN-Ins. This is L-cysteine:1D-myo-inositol 2-amino-2-deoxy-alpha-D-glucopyranoside ligase from Streptomyces griseus subsp. griseus (strain JCM 4626 / CBS 651.72 / NBRC 13350 / KCC S-0626 / ISP 5235).